Consider the following 138-residue polypeptide: ATP synthase epsilon chain (138 aa).

It belongs to the ATPase epsilon chain family. F-type ATPases have 2 components, CF(1) - the catalytic core - and CF(0) - the membrane proton channel. CF(1) has five subunits: alpha(3), beta(3), gamma(1), delta(1), epsilon(1). CF(0) has three main subunits: a, b and c.

Its subcellular location is the cell inner membrane. Functionally, produces ATP from ADP in the presence of a proton gradient across the membrane. The sequence is that of ATP synthase epsilon chain from Cupriavidus necator (strain ATCC 17699 / DSM 428 / KCTC 22496 / NCIMB 10442 / H16 / Stanier 337) (Ralstonia eutropha).